The sequence spans 409 residues: Arginine deiminase (409 aa).

C399 functions as the Amidino-cysteine intermediate in the catalytic mechanism.

This sequence belongs to the arginine deiminase family.

The protein localises to the cytoplasm. It carries out the reaction L-arginine + H2O = L-citrulline + NH4(+). Its pathway is amino-acid degradation; L-arginine degradation via ADI pathway; carbamoyl phosphate from L-arginine: step 1/2. This chain is Arginine deiminase, found in Streptococcus pneumoniae (strain 70585).